Here is a 614-residue protein sequence, read N- to C-terminus: Zinc finger protein 276 (614 aa).

The tract at residues 1 to 50 is disordered; the sequence is MKRDRLGRFLSPGSSRQCGASDGGGGVSRTRGRPSLSGGPRVDGATARRA. The 87-residue stretch at 77–163 folds into the ZAD domain; the sequence is GHCRLCHGKF…LQRVNASPAG (87 aa). Zn(2+) contacts are provided by C79, C82, C136, and C139. Positions 268–420 are disordered; the sequence is APRLPQHRGW…KKPGPKPGWK (153 aa). A compositionally biased stretch (acidic residues) spans 357 to 369; the sequence is SDLSEGDVLSEDE. Residues 386–408 show a composition bias toward basic and acidic residues; the sequence is YPERKVSGKKSESKEAKKSEEPR. The segment covering 409–420 has biased composition (basic residues); that stretch reads IRKKPGPKPGWK. C2H2-type zinc fingers lie at residues 434-458, 465-490, 496-518, 524-546, and 554-577; these read YKCP…IKEH, RPCP…KLIH, YICD…QMRH, LQCE…MTKH, and FACD…SMVH. Positions 583 to 614 are disordered; it reads QDKALPLEAEPPPGPPSPSVTTEGQAVKPEPT. Residues 591-600 show a composition bias toward pro residues; sequence AEPPPGPPSP.

The protein resides in the nucleus. It localises to the chromosome. It is found in the centromere. Its subcellular location is the kinetochore. May be involved in transcriptional regulation. This chain is Zinc finger protein 276 (ZNF276), found in Homo sapiens (Human).